Consider the following 310-residue polypeptide: Homoserine O-acetyltransferase (310 aa).

Cysteine 142 serves as the catalytic Acyl-thioester intermediate. Substrate-binding residues include lysine 163 and serine 192. The active-site Proton acceptor is histidine 235. The active site involves glutamate 237. Arginine 249 serves as a coordination point for substrate.

It belongs to the MetA family.

The protein resides in the cytoplasm. The catalysed reaction is L-homoserine + acetyl-CoA = O-acetyl-L-homoserine + CoA. Its pathway is amino-acid biosynthesis; L-methionine biosynthesis via de novo pathway; O-acetyl-L-homoserine from L-homoserine: step 1/1. Functionally, transfers an acetyl group from acetyl-CoA to L-homoserine, forming acetyl-L-homoserine. This Agathobacter rectalis (strain ATCC 33656 / DSM 3377 / JCM 17463 / KCTC 5835 / VPI 0990) (Eubacterium rectale) protein is Homoserine O-acetyltransferase.